Here is a 280-residue protein sequence, read N- to C-terminus: Energy-coupling factor transporter ATP-binding protein EcfA2 (280 aa).

Residues 3–245 form the ABC transporter domain; sequence INLQNVSYTY…VSLLEKKQLG (243 aa). 40–47 provides a ligand contact to ATP; the sequence is GHTGSGKS.

It belongs to the ABC transporter superfamily. Energy-coupling factor EcfA family. As to quaternary structure, forms a stable energy-coupling factor (ECF) transporter complex composed of 2 membrane-embedded substrate-binding proteins (S component), 2 ATP-binding proteins (A component) and 2 transmembrane proteins (T component).

It is found in the cell membrane. Its function is as follows. ATP-binding (A) component of a common energy-coupling factor (ECF) ABC-transporter complex. Unlike classic ABC transporters this ECF transporter provides the energy necessary to transport a number of different substrates. The chain is Energy-coupling factor transporter ATP-binding protein EcfA2 from Streptococcus pyogenes serotype M28 (strain MGAS6180).